Consider the following 261-residue polypeptide: Calbindin (261 aa).

Ala2 is modified (N-acetylalanine). The segment at 2–7 (AESHLQ) is interaction with RANBP9. EF-hand domains are found at residues 11 to 46 (ITASQFFEIWLHFDADGSGYLEGKELQNLIQELQQA), 53 to 88 (ELSPEMKTFVDQYGQRDDGKIGIVELAHVLPTEENF), 98 to 133 (KSCEEFMKTWRKYDTDHGGFIETEELKNFLKDLLEK), 142 to 177 (KLAEYTDLMLKLFDSNNDGKLELTEMARLLPVQENF), and 186 to 221 (MCGKEFNKAFELYDQDGNGYIDENELDALLKDLCEK). The Ca(2+) site is built by Asp24, Asp26, Ser28, Tyr30, and Glu35. Ca(2+)-binding residues include Asp111, Asp113, Glu122, Asp155, Asn157, Asp159, Lys161, Glu166, Asp199, Asp201, Asn203, Tyr205, and Glu210.

Belongs to the calbindin family. As to quaternary structure, interacts with RANBP9.

Functionally, buffers cytosolic calcium. May stimulate a membrane Ca(2+)-ATPase and a 3',5'-cyclic nucleotide phosphodiesterase. The protein is Calbindin (CALB1) of Pongo abelii (Sumatran orangutan).